Consider the following 440-residue polypeptide: Ultraviolet-B receptor UVR8 (440 aa).

Position 2 is an N-acetylalanine (A2). 8 RCC1 repeats span residues 2-31 (AEDM…VALL), 32-84 (SGDI…AYSQ), 86-137 (GMEV…AVTM), 139-189 (GEVQ…AVTE), 190-241 (DGDL…SVSY), 243-293 (GALY…ALTS), 294-345 (DGKL…AVTE), and 347-399 (NNVF…SGKS). Residues 397 to 423 (GKSWVSPAERYAVVPDETGLTDGSSKG) are required for interaction with COP1. The segment at 413–440 (ETGLTDGSSKGNGGDISVPQTDVKRVRI) is disordered.

As to quaternary structure, homodimer in the absence of UV-B, but absorption of UV-B induces monomerization of UVR8 and interaction with COP1. Interacts with RUP1, RUP2 and histone H2B.

It is found in the nucleus. The protein resides in the cytoplasm. The protein localises to the cytosol. Functionally, UV-B specific signaling component that acts as a UV-B photoreceptor and plays a key role in establishing UV-protective responses in plants. Upon UV-B irradiation, UVR8 undergoes an immediate switch from homodimer to monomer, accumulates in the nucleus, interacts with the photomorphogenic repressor COP1 and regulates the expression of the transcription factor HY5 by associating with chromatin (through histone H2B binding) in the HY5 promoter region. UVR8 is involved in controlling aspects of leaf growth and morphogenesis in response to UV-B, is required for normal progression of endocycle and has a regulatory role in stomatal differentiation. Is required for plant circadian clock response to photomorphogenic UV-B light, partly through the transcriptional activation of responsive clock genes. Promotes photosynthetic efficiency at elevated levels of UV-B. Plays a role in mediating the effects of UV-B radiation on pathogen resistance by controlling the expression of the sinapate biosynthetic pathway. The two tryptophans, Trp-285 and Trp-233, serve collectively as the UV-B chromophore. In Arabidopsis thaliana (Mouse-ear cress), this protein is Ultraviolet-B receptor UVR8.